Reading from the N-terminus, the 420-residue chain is Tyrosine--tRNA ligase (420 aa).

Tyr36 lines the L-tyrosine pocket. Positions 41-50 (PTADSLHIGH) match the 'HIGH' region motif. Residues Tyr170 and Gln174 each contribute to the L-tyrosine site. The 'KMSKS' region signature appears at 231-235 (KFGKS). Lys234 serves as a coordination point for ATP. The S4 RNA-binding domain maps to 353–420 (TNIVEVLIET…KKKYFMVNYQ (68 aa)).

The protein belongs to the class-I aminoacyl-tRNA synthetase family. TyrS type 1 subfamily. As to quaternary structure, homodimer.

It is found in the cytoplasm. The catalysed reaction is tRNA(Tyr) + L-tyrosine + ATP = L-tyrosyl-tRNA(Tyr) + AMP + diphosphate + H(+). Functionally, catalyzes the attachment of tyrosine to tRNA(Tyr) in a two-step reaction: tyrosine is first activated by ATP to form Tyr-AMP and then transferred to the acceptor end of tRNA(Tyr). This is Tyrosine--tRNA ligase from Staphylococcus aureus (strain bovine RF122 / ET3-1).